The chain runs to 217 residues: U2 snRNP component ist3 (217 aa).

In terms of domain architecture, RRM spans 31 to 109 (AYIYIGNLDF…RLVRVDHVAS (79 aa)). 2 disordered regions span residues 119 to 138 (PANL…STIN) and 154 to 217 (EVEQ…DLDG). Polar residues predominate over residues 128–138 (SGSSLSVSTIN). Ser-160 bears the Phosphoserine mark. Basic and acidic residues-rich tracts occupy residues 161-176 (PKDE…DYIH) and 185-198 (HESS…DSNR). The segment covering 199 to 217 (HSRHHRRHSRSRRHRDLDG) has biased composition (basic residues).

This sequence belongs to the IST3 family. In terms of assembly, belongs to the 40S cdc5-associated complex (or cwf complex), a spliceosome sub-complex reminiscent of a late-stage spliceosome composed of the U2, U5 and U6 snRNAs and at least brr2, cdc5, cwf2/prp3, cwf3/syf1, cwf4/syf3, cwf5/ecm2, spp42/cwf6, cwf7/spf27, cwf8, cwf9, cwf10, cwf11, cwf12, prp45/cwf13, cwf14, cwf15, cwf16, cwf17, cwf18, cwf19, cwf20, cwf21, cwf22, cwf23, cwf24, cwf25, cwf26, cyp7/cwf27, cwf28, cwf29/ist3, lea1, msl1, prp5/cwf1, prp10, prp12/sap130, prp17, prp22, sap61, sap62, sap114, sap145, slu7, smb1, smd1, smd3, smf1, smg1 and syf2.

It localises to the nucleus. Functionally, required for pre-mRNA splicing and spliceosome assembly. The sequence is that of U2 snRNP component ist3 (cwf29) from Schizosaccharomyces pombe (strain 972 / ATCC 24843) (Fission yeast).